A 273-amino-acid polypeptide reads, in one-letter code: Putative phosphoenolpyruvate synthase regulatory protein (273 aa).

Residue 153–160 (AVSRAGKT) coordinates ADP.

This sequence belongs to the pyruvate, phosphate/water dikinase regulatory protein family. PSRP subfamily.

It catalyses the reaction [pyruvate, water dikinase] + ADP = [pyruvate, water dikinase]-phosphate + AMP + H(+). The enzyme catalyses [pyruvate, water dikinase]-phosphate + phosphate + H(+) = [pyruvate, water dikinase] + diphosphate. In terms of biological role, bifunctional serine/threonine kinase and phosphorylase involved in the regulation of the phosphoenolpyruvate synthase (PEPS) by catalyzing its phosphorylation/dephosphorylation. In Xanthomonas axonopodis pv. citri (strain 306), this protein is Putative phosphoenolpyruvate synthase regulatory protein.